The following is an 82-amino-acid chain: ATP synthase subunit c, chloroplastic (82 aa).

The next 2 helical transmembrane spans lie at A7–G27 and L57–A77.

It belongs to the ATPase C chain family. F-type ATPases have 2 components, F(1) - the catalytic core - and F(0) - the membrane proton channel. F(1) has five subunits: alpha(3), beta(3), gamma(1), delta(1), epsilon(1). F(0) has four main subunits: a(1), b(1), b'(1) and c(10-14). The alpha and beta chains form an alternating ring which encloses part of the gamma chain. F(1) is attached to F(0) by a central stalk formed by the gamma and epsilon chains, while a peripheral stalk is formed by the delta, b and b' chains.

It localises to the plastid. The protein resides in the chloroplast thylakoid membrane. Its function is as follows. F(1)F(0) ATP synthase produces ATP from ADP in the presence of a proton or sodium gradient. F-type ATPases consist of two structural domains, F(1) containing the extramembraneous catalytic core and F(0) containing the membrane proton channel, linked together by a central stalk and a peripheral stalk. During catalysis, ATP synthesis in the catalytic domain of F(1) is coupled via a rotary mechanism of the central stalk subunits to proton translocation. Key component of the F(0) channel; it plays a direct role in translocation across the membrane. A homomeric c-ring of between 10-14 subunits forms the central stalk rotor element with the F(1) delta and epsilon subunits. The protein is ATP synthase subunit c, chloroplastic of Porphyra purpurea (Red seaweed).